The primary structure comprises 226 residues: Orotate phosphoribosyltransferase (226 aa).

5-phospho-alpha-D-ribose 1-diphosphate is bound by residues Arg107, Lys108, Lys111, and 133 to 141 (EDLTTDGGS). Thr137 is an orotate binding site.

It belongs to the purine/pyrimidine phosphoribosyltransferase family. PyrE subfamily. As to quaternary structure, homodimer. It depends on Mg(2+) as a cofactor.

It catalyses the reaction orotidine 5'-phosphate + diphosphate = orotate + 5-phospho-alpha-D-ribose 1-diphosphate. Its pathway is pyrimidine metabolism; UMP biosynthesis via de novo pathway; UMP from orotate: step 1/2. Functionally, catalyzes the transfer of a ribosyl phosphate group from 5-phosphoribose 1-diphosphate to orotate, leading to the formation of orotidine monophosphate (OMP). In Dinoroseobacter shibae (strain DSM 16493 / NCIMB 14021 / DFL 12), this protein is Orotate phosphoribosyltransferase.